Consider the following 359-residue polypeptide: Fructose-bisphosphate aldolase, cytoplasmic isozyme 2 (359 aa).

Positions 52 and 143 each coordinate substrate. Residue E184 is the Proton acceptor of the active site. K226 acts as the Schiff-base intermediate with dihydroxyacetone-P in catalysis.

The protein belongs to the class I fructose-bisphosphate aldolase family.

The protein resides in the cytoplasm. It catalyses the reaction beta-D-fructose 1,6-bisphosphate = D-glyceraldehyde 3-phosphate + dihydroxyacetone phosphate. It functions in the pathway carbohydrate degradation; glycolysis; D-glyceraldehyde 3-phosphate and glycerone phosphate from D-glucose: step 4/4. The chain is Fructose-bisphosphate aldolase, cytoplasmic isozyme 2 from Pisum sativum (Garden pea).